Consider the following 246-residue polypeptide: tRNA (guanine-N(1)-)-methyltransferase (246 aa).

Residues glycine 114 and 134–139 (IGDYIL) each bind S-adenosyl-L-methionine.

This sequence belongs to the RNA methyltransferase TrmD family. In terms of assembly, homodimer.

It is found in the cytoplasm. It catalyses the reaction guanosine(37) in tRNA + S-adenosyl-L-methionine = N(1)-methylguanosine(37) in tRNA + S-adenosyl-L-homocysteine + H(+). Specifically methylates guanosine-37 in various tRNAs. The polypeptide is tRNA (guanine-N(1)-)-methyltransferase (Coxiella burnetii (strain CbuK_Q154) (Coxiella burnetii (strain Q154))).